The following is a 33-amino-acid chain: Gastrin (33 aa).

Q1 is modified (pyrrolidone carboxylic acid). Y28 carries the sulfotyrosine modification. F33 carries the post-translational modification Phenylalanine amide.

It belongs to the gastrin/cholecystokinin family. Post-translationally, sulfation enhances proteolytic processing, and blocks peptide degradation. Levels of sulfation differ between proteolytically-cleaved gastrins and between tissues.

It localises to the secreted. In terms of biological role, gastrin stimulates the stomach mucosa to produce and secrete hydrochloric acid and the pancreas to secrete its digestive enzymes. It also stimulates smooth muscle contraction and increases blood circulation and water secretion in the stomach and intestine. The protein is Gastrin (GAST) of Macropus giganteus (Eastern gray kangaroo).